A 113-amino-acid polypeptide reads, in one-letter code: PTS system fructose-like EIIB component 3 (113 aa).

A PTS EIIB type-2 domain is found at 1–100 (MAYLVAVTAC…PQRVMSAVRK (100 aa)). The active-site Phosphocysteine intermediate is cysteine 10. Cysteine 10 carries the phosphocysteine; by EIIA modification.

It localises to the cytoplasm. It carries out the reaction D-fructose(out) + N(pros)-phospho-L-histidyl-[protein] = D-fructose 1-phosphate(in) + L-histidyl-[protein]. Functionally, the phosphoenolpyruvate-dependent sugar phosphotransferase system (sugar PTS), a major carbohydrate active transport system, catalyzes the phosphorylation of incoming sugar substrates concomitantly with their translocation across the cell membrane. The polypeptide is PTS system fructose-like EIIB component 3 (frwD) (Escherichia coli (strain K12)).